A 426-amino-acid polypeptide reads, in one-letter code: Putative acid phosphatase 1 (426 aa).

A signal peptide spans 1–18 (MRVLFYVSILVIIASVHT). Residues 19 to 388 (QLISVHVIFR…SEWVMTPLSW (370 aa)) are Extracellular-facing. Histidine 29 acts as the Nucleophile in catalysis. N-linked (GlcNAc...) asparagine glycans are attached at residues asparagine 37 and asparagine 145. Cysteine 133 and cysteine 369 are joined by a disulfide. The Proton donor role is filled by aspartate 276. The helical transmembrane segment at 389 to 409 (IIVAIAILLLIALILMTYFVI) threads the bilayer. Residues 410-426 (RYKNRSIVNIKKLSLEN) lie on the Cytoplasmic side of the membrane.

Belongs to the histidine acid phosphatase family.

Its subcellular location is the membrane. The catalysed reaction is a phosphate monoester + H2O = an alcohol + phosphate. This is Putative acid phosphatase 1 from Caenorhabditis elegans.